We begin with the raw amino-acid sequence, 94 residues long: Venom protein 59.1 (94 aa).

Residues 1–22 (MNSREMFCVFILFASFFYCSYA) form the signal peptide. Disulfide bonds link C19-C47, C26-C49, C32-C50, C38-C53, C61-C76, and C70-C91. In terms of domain architecture, IGFBP N-terminal spans 23 to 94 (EQECNCDKSC…GEALEICLRA (72 aa)).

In terms of tissue distribution, expressed by the venom gland.

Its subcellular location is the secreted. The polypeptide is Venom protein 59.1 (Lychas mucronatus (Chinese swimming scorpion)).